A 142-amino-acid polypeptide reads, in one-letter code: Succinate dehydrogenase assembly factor 2, mitochondrial (142 aa).

Belongs to the SDHAF2 family. As to quaternary structure, interacts with the flavoprotein subunit within the SDH catalytic dimer.

It localises to the mitochondrion matrix. In terms of biological role, plays an essential role in the assembly of succinate dehydrogenase (SDH), an enzyme complex (also referred to as respiratory complex II) that is a component of both the tricarboxylic acid (TCA) cycle and the mitochondrial electron transport chain, and which couples the oxidation of succinate to fumarate with the reduction of ubiquinone (coenzyme Q) to ubiquinol. Required for flavinylation (covalent attachment of FAD) of the flavoprotein subunit of the SDH catalytic dimer. This Debaryomyces hansenii (strain ATCC 36239 / CBS 767 / BCRC 21394 / JCM 1990 / NBRC 0083 / IGC 2968) (Yeast) protein is Succinate dehydrogenase assembly factor 2, mitochondrial.